A 659-amino-acid polypeptide reads, in one-letter code: Threonine--tRNA ligase (659 aa).

Positions M1–T60 constitute a TGS domain. Catalytic regions lie at residues T234 to A548 and D252 to P552. 3 residues coordinate Zn(2+): C349, H400, and H529.

The protein belongs to the class-II aminoacyl-tRNA synthetase family. In terms of assembly, homodimer. Zn(2+) is required as a cofactor.

The protein localises to the cytoplasm. It catalyses the reaction tRNA(Thr) + L-threonine + ATP = L-threonyl-tRNA(Thr) + AMP + diphosphate + H(+). Functionally, catalyzes the attachment of threonine to tRNA(Thr) in a two-step reaction: L-threonine is first activated by ATP to form Thr-AMP and then transferred to the acceptor end of tRNA(Thr). Also edits incorrectly charged L-seryl-tRNA(Thr). This is Threonine--tRNA ligase from Thermus thermophilus (strain ATCC 27634 / DSM 579 / HB8).